The following is a 1451-amino-acid chain: ABC transporter G family member 32 (1451 aa).

Residues 162-435 enclose the ABC transporter 1 domain; that stretch reads GNALHISPTR…FELMGFRCPQ (274 aa). An ATP-binding site is contributed by 195–202; it reads GPPGSGKT. Residues 513 to 725 enclose the ABC transmembrane type-2 1 domain; it reads ALLKANIDRE…AQNAISTNEF (213 aa). 6 consecutive transmembrane segments (helical) span residues 531-551, 563-583, 618-638, 650-670, 674-694, and 760-780; these read FVYIFKAANLTLTAFLVMTTF, GTIYMGALYFALDTIMFNGFA, IPVTFFEVGVYVFTTYYVVGF, LLLVALNQMSSSLFRFIAGIG, VVSQTFGPLSLLAFTALGGFI, and IGFGALIGYTLLFNLLYTVAL. Residues 809 to 835 are disordered; sequence ILDSCEEKKSRKKEQSQSVNQKHWNNT. A compositionally biased stretch (basic and acidic residues) spans 813 to 823; sequence CEEKKSRKKEQ. The ABC transporter 2 domain maps to 853-1105; that stretch reads LSFNDIKYSV…KLIEYFEGIE (253 aa). 898–905 contacts ATP; sequence GVSGAGKT. The ABC transmembrane type-2 2 domain maps to 1178-1392; sequence TQCIACLWKH…TLYGLVASQF (215 aa). 7 helical membrane-spanning segments follow: residues 1197–1217, 1237–1257, 1285–1305, 1312–1332, 1342–1362, 1373–1393, and 1423–1443; these read YTAVRLLFTIIIALLFGTMFW, YAAVLYIGIQNSGCVQPVVVV, LPYILVQTLVYGVLVYSMIGF, FIWYLFFMYFTLLYFTFFGMM, IAAIISPAIYNAWNLFSGYLI, WYCWICPVAWTLYGLVASQFG, and LVAVVHVVFTVMFAFLFSFAI.

This sequence belongs to the ABC transporter superfamily. ABCG family. PDR (TC 3.A.1.205) subfamily.

The protein localises to the membrane. Functionally, may be a general defense protein. This Oryza sativa subsp. japonica (Rice) protein is ABC transporter G family member 32.